The following is a 231-amino-acid chain: UPF0758 protein pc1765 (231 aa).

Residues 107–229 (LIEHSSHAYQ…YVSFKDQNLL (123 aa)) form the MPN domain. Zn(2+) is bound by residues H178, H180, and D191. Positions 178–191 (HNHPSGDPMPSNQD) match the JAMM motif motif.

This sequence belongs to the UPF0758 family.

In Protochlamydia amoebophila (strain UWE25), this protein is UPF0758 protein pc1765.